Consider the following 260-residue polypeptide: Hemin import ATP-binding protein HmuV (260 aa).

An ABC transporter domain is found at 6–242 (LHADNLHYRA…VQLRACYQAD (237 aa)). An ATP-binding site is contributed by 38–45 (GPNGAGKS).

This sequence belongs to the ABC transporter superfamily. Heme (hemin) importer (TC 3.A.1.14.5) family. As to quaternary structure, the complex is composed of two ATP-binding proteins (HmuV), two transmembrane proteins (HmuU) and a solute-binding protein (HmuT).

The protein localises to the cell inner membrane. Part of the ABC transporter complex HmuTUV involved in hemin import. Responsible for energy coupling to the transport system. This is Hemin import ATP-binding protein HmuV from Sodalis glossinidius (strain morsitans).